The chain runs to 273 residues: Undecaprenyl-diphosphatase (273 aa).

7 consecutive transmembrane segments (helical) span residues 6–26 (SLLIAAILGVVEGLTEFLPVS), 45–65 (AKTFEVVIQLGSILAVVVMFW), 90–110 (LTLIHILLGMIPAVVLGLLFH), 116–136 (LFNPINVMYALVVGGLLLIAA), 190–210 (YAASEFSFLLAVPMMMGATAL), 222–242 (GDISMFAVGFITAFVVALIAI), and 252–272 (ISFIPFAIYRFIVAAAVYVVF).

This sequence belongs to the UppP family.

The protein resides in the cell inner membrane. The catalysed reaction is di-trans,octa-cis-undecaprenyl diphosphate + H2O = di-trans,octa-cis-undecaprenyl phosphate + phosphate + H(+). Functionally, catalyzes the dephosphorylation of undecaprenyl diphosphate (UPP). Confers resistance to bacitracin. The protein is Undecaprenyl-diphosphatase of Shigella sonnei (strain Ss046).